The following is a 1305-amino-acid chain: Serine protease EspC (1305 aa).

The N-terminal stretch at 1 to 53 is a signal peptide; the sequence is MNKIYALKYCHATGGLIAVSELASRVMKKAARGSLLALFNLSLYGAFLSASQA. Positions 55 to 297 constitute a Peptidase S6 domain; that stretch reads QLNIDNVWAR…SILNQYDENT (243 aa). Catalysis depends on charge relay system residues histidine 125, aspartate 153, and serine 256. Positions 1039–1305 constitute an Autotransporter domain; it reads DTQGDAGVWA…AINANFRYSF (267 aa).

Post-translationally, cleaved to release the mature protein from the outer membrane.

The protein resides in the periplasm. It localises to the secreted. It is found in the cell surface. Its subcellular location is the cell outer membrane. Its activity is regulated as follows. Inhibition of cytotoxic activity by phenylmethylsulfonyl fluoride. Serine protease with enterotoxic and cytotoxic activities. Cleaves fodrin, but does not cause its redistribution within epithelial cells. The exact role of EspC in EPEC pathogenesis is still unknown. In Escherichia coli O127:H6 (strain E2348/69 / EPEC), this protein is Serine protease EspC (espC).